The sequence spans 366 residues: Erythronate-4-phosphate dehydrogenase (366 aa).

Residues S46 and T67 each coordinate substrate. Residues D147 and T175 each contribute to the NAD(+) site. R208 is an active-site residue. D228 provides a ligand contact to NAD(+). E233 is an active-site residue. H250 acts as the Proton donor in catalysis. G253 provides a ligand contact to NAD(+). Y254 serves as a coordination point for substrate.

This sequence belongs to the D-isomer specific 2-hydroxyacid dehydrogenase family. PdxB subfamily. In terms of assembly, homodimer.

It localises to the cytoplasm. It carries out the reaction 4-phospho-D-erythronate + NAD(+) = (R)-3-hydroxy-2-oxo-4-phosphooxybutanoate + NADH + H(+). The protein operates within cofactor biosynthesis; pyridoxine 5'-phosphate biosynthesis; pyridoxine 5'-phosphate from D-erythrose 4-phosphate: step 2/5. Its function is as follows. Catalyzes the oxidation of erythronate-4-phosphate to 3-hydroxy-2-oxo-4-phosphonooxybutanoate. The polypeptide is Erythronate-4-phosphate dehydrogenase (Coxiella burnetii (strain Dugway 5J108-111)).